The sequence spans 94 residues: Large ribosomal subunit protein bL25 (94 aa).

It belongs to the bacterial ribosomal protein bL25 family. Part of the 50S ribosomal subunit; part of the 5S rRNA/L5/L18/L25 subcomplex. Contacts the 5S rRNA. Binds to the 5S rRNA independently of L5 and L18.

This is one of the proteins that binds to the 5S RNA in the ribosome where it forms part of the central protuberance. The chain is Large ribosomal subunit protein bL25 from Serratia proteamaculans (strain 568).